The primary structure comprises 381 residues: Putative F-box protein At4g17200 (381 aa).

The F-box domain maps to 1 to 47; the sequence is MTTMSDLSPDLVGEILTRVPMTSLISVRCTCKMWNALSKEGIFFKAA.

The chain is Putative F-box protein At4g17200 from Arabidopsis thaliana (Mouse-ear cress).